Here is a 555-residue protein sequence, read N- to C-terminus: CTP synthase (555 aa).

The interval 1–279 (MATNRAKSST…DNYIIRRLNL (279 aa)) is amidoligase domain. Ser21 contributes to the CTP binding site. Residue Ser21 participates in UTP binding. Residues 22–27 (SLGKGL) and Asp79 contribute to the ATP site. Asp79 and Glu153 together coordinate Mg(2+). Residues 160 to 162 (DIE), 200 to 205 (KTKPTQ), and Lys236 each bind CTP. UTP contacts are provided by residues 200-205 (KTKPTQ) and Lys236. One can recognise a Glutamine amidotransferase type-1 domain in the interval 304-553 (TIGIVGKYID…VDAALKHQAG (250 aa)). Gly367 contacts L-glutamine. Cys394 acts as the Nucleophile; for glutamine hydrolysis in catalysis. Residues 395 to 398 (LGLQ), Glu417, and Arg478 each bind L-glutamine. Catalysis depends on residues His526 and Glu528.

This sequence belongs to the CTP synthase family. As to quaternary structure, homotetramer.

It carries out the reaction UTP + L-glutamine + ATP + H2O = CTP + L-glutamate + ADP + phosphate + 2 H(+). The enzyme catalyses L-glutamine + H2O = L-glutamate + NH4(+). It catalyses the reaction UTP + NH4(+) + ATP = CTP + ADP + phosphate + 2 H(+). The protein operates within pyrimidine metabolism; CTP biosynthesis via de novo pathway; CTP from UDP: step 2/2. With respect to regulation, allosterically activated by GTP, when glutamine is the substrate; GTP has no effect on the reaction when ammonia is the substrate. The allosteric effector GTP functions by stabilizing the protein conformation that binds the tetrahedral intermediate(s) formed during glutamine hydrolysis. Inhibited by the product CTP, via allosteric rather than competitive inhibition. In terms of biological role, catalyzes the ATP-dependent amination of UTP to CTP with either L-glutamine or ammonia as the source of nitrogen. Regulates intracellular CTP levels through interactions with the four ribonucleotide triphosphates. The chain is CTP synthase from Corynebacterium jeikeium (strain K411).